Consider the following 229-residue polypeptide: Large ribosomal subunit protein bL25 (229 aa).

Disordered regions lie at residues 1-21 (MSDA…GASR) and 187-229 (PSAL…KGDD). Residues 196–207 (SEEEEDGEEVDA) are compositionally biased toward acidic residues.

Belongs to the bacterial ribosomal protein bL25 family. CTC subfamily. As to quaternary structure, part of the 50S ribosomal subunit; part of the 5S rRNA/L5/L18/L25 subcomplex. Contacts the 5S rRNA. Binds to the 5S rRNA independently of L5 and L18.

This is one of the proteins that binds to the 5S RNA in the ribosome where it forms part of the central protuberance. The polypeptide is Large ribosomal subunit protein bL25 (Erythrobacter litoralis (strain HTCC2594)).